The chain runs to 142 residues: Hemoglobin subunit alpha-A (142 aa).

The Globin domain maps to 2 to 142 (VLSANDKSNV…VGTVLTAKYR (141 aa)). Residue histidine 59 coordinates O2. Residue histidine 88 participates in heme b binding.

Belongs to the globin family. In terms of assembly, heterotetramer of two alpha chains and two beta chains. Red blood cells.

Its function is as follows. Involved in oxygen transport from the lung to the various peripheral tissues. This Columba livia (Rock dove) protein is Hemoglobin subunit alpha-A (HBAA).